The sequence spans 122 residues: Large ribosomal subunit protein uL14c (122 aa).

Belongs to the universal ribosomal protein uL14 family. As to quaternary structure, part of the 50S ribosomal subunit.

Its subcellular location is the plastid. It localises to the chloroplast. Functionally, binds to 23S rRNA. The protein is Large ribosomal subunit protein uL14c of Liriodendron tulipifera (Tuliptree).